We begin with the raw amino-acid sequence, 745 residues long: MFNEITKSVMWNGQVLEISTGKIARQANAAVTVKMGNSILLCTCVVANKVKDGIGFFPLTINYREMAYSAGKIPGGFFKREGKASDREILVSRLIDRPIRPLFHQAFMHETHVTCSVLSYDPATPVDILAIIGASAALSISPAPYLEIVAASKVGLINGEFVLNPTLELLKTSQLDLVVAGTEDSVMMVESEAHLLSEDKMLEAVKFGFESFQTVIKLIKELAKEAKKPKFEMQDLYPSSLKKEIEKLFTKEVEQAFEIKSKQERSTDLALIYEKVLTHFVRDIENKKYNNYQIESALKAISADILRNKILEKNIRIDGRSTTDIRQIACEVGLLPSAHGSALFTRGETQSLVSTTFGTSLDEQIVDSLEGEYKERFMLNYIFPPYSVNEAMPMKAPSRREVGHGKLAWRAINPILPNKVQFPYSIRVVAETTESNGSSSMATVCGSSLALMHAGVPIKAPVAGIAMGLVKESNKFAVLSDIIGDEDYFGDMDFKVAGTSSGITALQMDIKISGIDFKIIQIALEQARLGRLHILEQMNKVISKPNSELSKNAPSSTTVKIDKDKIKDIIGPGGKIIKEICETSNAKIDISDDGTVSIYASDRDKIKIALDKIKAIAVEPEIGEIFNGTVMKVLDSGAFINYLGNKDGFVHISEISDARIDKVSSVLKQGDIVKVKLIGFDNKGKAKLTIKNAYKDHSSNNTKQKNNVKDDSESEQRRDTSKKRTWNEDNNTEMSEVITERKYFT.

Residues Asp487 and Asp493 each contribute to the Mg(2+) site. The KH domain occupies 554–613 (PSSTTVKIDKDKIKDIIGPGGKIIKEICETSNAKIDISDDGTVSIYASDRDKIKIALDKI). The 69-residue stretch at 623–691 (GEIFNGTVMK…NKGKAKLTIK (69 aa)) folds into the S1 motif domain. The tract at residues 693-732 (AYKDHSSNNTKQKNNVKDDSESEQRRDTSKKRTWNEDNNT) is disordered. Residues 707 to 719 (NVKDDSESEQRRD) are compositionally biased toward basic and acidic residues.

It belongs to the polyribonucleotide nucleotidyltransferase family. Requires Mg(2+) as cofactor.

The protein resides in the cytoplasm. The enzyme catalyses RNA(n+1) + phosphate = RNA(n) + a ribonucleoside 5'-diphosphate. In terms of biological role, involved in mRNA degradation. Catalyzes the phosphorolysis of single-stranded polyribonucleotides processively in the 3'- to 5'-direction. This Rickettsia prowazekii (strain Madrid E) protein is Polyribonucleotide nucleotidyltransferase.